The sequence spans 261 residues: 3-methyl-2-oxobutanoate hydroxymethyltransferase (261 aa).

Mg(2+) is bound by residues D42 and D81. 3-methyl-2-oxobutanoate-binding positions include 42 to 43, D81, and K110; that span reads DS. Position 112 (E112) interacts with Mg(2+). Residue E179 is the Proton acceptor of the active site.

The protein belongs to the PanB family. In terms of assembly, homodecamer; pentamer of dimers. The cofactor is Mg(2+).

The protein localises to the cytoplasm. The catalysed reaction is 3-methyl-2-oxobutanoate + (6R)-5,10-methylene-5,6,7,8-tetrahydrofolate + H2O = 2-dehydropantoate + (6S)-5,6,7,8-tetrahydrofolate. The protein operates within cofactor biosynthesis; coenzyme A biosynthesis. Catalyzes the reversible reaction in which hydroxymethyl group from 5,10-methylenetetrahydrofolate is transferred onto alpha-ketoisovalerate to form ketopantoate. The polypeptide is 3-methyl-2-oxobutanoate hydroxymethyltransferase (Pyrobaculum islandicum (strain DSM 4184 / JCM 9189 / GEO3)).